The primary structure comprises 156 residues: Large ribosomal subunit protein uL15 (156 aa).

The tract at residues 25-48 (RGIGCGKGKTSGRGHKGQKARSGV) is disordered. The segment covering 34-43 (TSGRGHKGQK) has biased composition (basic residues).

This sequence belongs to the universal ribosomal protein uL15 family. In terms of assembly, part of the 50S ribosomal subunit.

Its function is as follows. Binds to the 23S rRNA. In Wolbachia pipientis wMel, this protein is Large ribosomal subunit protein uL15.